The following is a 276-amino-acid chain: Urease accessory protein UreD (276 aa).

It belongs to the UreD family. In terms of assembly, ureD, UreF and UreG form a complex that acts as a GTP-hydrolysis-dependent molecular chaperone, activating the urease apoprotein by helping to assemble the nickel containing metallocenter of UreC. The UreE protein probably delivers the nickel.

Its subcellular location is the cytoplasm. Required for maturation of urease via the functional incorporation of the urease nickel metallocenter. This is Urease accessory protein UreD from Polaromonas naphthalenivorans (strain CJ2).